A 578-amino-acid chain; its full sequence is MLDSKLRFFLQRCVVLEQAKQVHAQLVVNRYNHLEPILVHQTLHFTKEFSRNIVTYVKRILKGFNGHDSFSWGCLVRFLSQHRKFKETVDVYIDMHNSGIPPSSHAVTSVLRACGKMENMVDGKPIHAQALKNGLCGCVYVQTGLVGLYSRLGYIELAKKAFDDIAEKNTVSWNSLLHGYLESGELDEARRVFDKIPEKDAVSWNLIISSYAKKGDMGNACSLFSAMPLKSPASWNILIGGYVNCREMKLARTYFDAMPQKNGVSWITMISGYTKLGDVQSAEELFRLMSKKDKLVYDAMIACYTQNGKPKDALKLFAQMLERNSYIQPDEITLSSVVSANSQLGNTSFGTWVESYITEHGIKIDDLLSTSLIDLYMKGGDFAKAFKMFSNLNKKDTVSYSAMIMGCGINGMATEANSLFTAMIEKKIPPNVVTFTGLLSAYSHSGLVQEGYKCFNSMKDHNLEPSADHYGIMVDMLGRAGRLEEAYELIKSMPMQPNAGVWGALLLASGLHNNVEFGEIACSHCVKLETDPTGYLSHLAMIYSSVGRWDDARTVRDSIKEKKLCKTLGCSWVEGSYH.

13 PPR repeats span residues 68–102 (DSFS…GIPP), 103–137 (SSHA…GLCG), 138–168 (CVYV…IAEK), 169–203 (NTVS…DAVS), 204–230 (WNLI…MPLK), 231–261 (SPAS…MPQK), 262–292 (NGVS…MSKK), 293–327 (DKLV…NSYI), 330–364 (DEIT…GIKI), 365–395 (DDLL…LNKK), 396–430 (DTVS…KIPP), 431–465 (NVVT…NLEP), and 466–496 (SADH…MPMQ). The type E motif stretch occupies residues 501 to 576 (VWGALLLASG…TLGCSWVEGS (76 aa)).

Belongs to the PPR family. PCMP-E subfamily.

In Arabidopsis thaliana (Mouse-ear cress), this protein is Pentatricopeptide repeat-containing protein At4g22760 (PCMP-E6).